Reading from the N-terminus, the 136-residue chain is Holo-[acyl-carrier-protein] synthase (136 aa).

Residues Asp8 and Glu57 each coordinate Mg(2+).

It belongs to the P-Pant transferase superfamily. AcpS family. Mg(2+) serves as cofactor.

Its subcellular location is the cytoplasm. It carries out the reaction apo-[ACP] + CoA = holo-[ACP] + adenosine 3',5'-bisphosphate + H(+). In terms of biological role, transfers the 4'-phosphopantetheine moiety from coenzyme A to a Ser of acyl-carrier-protein. This Methylorubrum populi (strain ATCC BAA-705 / NCIMB 13946 / BJ001) (Methylobacterium populi) protein is Holo-[acyl-carrier-protein] synthase.